Consider the following 548-residue polypeptide: Probable malate:quinone oxidoreductase (548 aa).

The segment at 522–548 (KPQAADSTPKPQLKPKPVQKEVADIAL) is disordered. Positions 539–548 (VQKEVADIAL) are enriched in basic and acidic residues.

This sequence belongs to the MQO family. FAD serves as cofactor.

The catalysed reaction is (S)-malate + a quinone = a quinol + oxaloacetate. It functions in the pathway carbohydrate metabolism; tricarboxylic acid cycle; oxaloacetate from (S)-malate (quinone route): step 1/1. The chain is Probable malate:quinone oxidoreductase from Escherichia coli O9:H4 (strain HS).